A 450-amino-acid polypeptide reads, in one-letter code: MVKPFEPEFQQALDELTTSLQPFLDANPQYKKALEIVQVPERVLQFRVVWEDDQGVAQVNHGFRVQYNSALGPYKGGLRLHPSVNLSILKFLGFEQTFKNALTGLSMGGGKGGSDFDPKGKSDSEIRRFCFSFMGELFRHIGSDTDVPAGDIGTGGREIGFLFGAYKKLRNEFTGMLTGKGLTWGGSFIRPEATGYGLIYFVEHMIAKACPEYSLDKPSTLVAISGSGNVAQFTALKVIELGATVLSLSDSKGSLISDKGYTKEFIRKVADLKLKGGSLASLANEEGYTYHAGARPWTLIPTIHIALPGATQNEVSAEEAEALLKAGVRIVAEGSNMGCTADAIDIFESSRKAGPGGVWYAPGKASNCGGVAVSGLEMAQNSQRLAWTTQEVDSKLKDIMAECYGICLTAGTKWSGEELTDEVLPSLLSGANVAGFIKVADAMKAQGDWW.

Lys-111 is a catalytic residue.

Belongs to the Glu/Leu/Phe/Val dehydrogenases family. In terms of assembly, homohexamer.

The enzyme catalyses L-glutamate + NADP(+) + H2O = 2-oxoglutarate + NH4(+) + NADPH + H(+). The sequence is that of NADP-specific glutamate dehydrogenase from Hebeloma cylindrosporum.